The chain runs to 357 residues: Arginine kinase Pro c 2.0101 (357 aa).

The region spanning Lys-9 to Lys-91 is the Phosphagen kinase N-terminal domain. Residue Gly-64–Tyr-68 coordinates L-arginine. The Phosphagen kinase C-terminal domain maps to Phe-119 to Met-356. ATP-binding positions include Ser-122 to Arg-126 and His-185. Residue Glu-225 coordinates L-arginine. An ATP-binding site is contributed by Arg-229. Residue Cys-271 coordinates L-arginine. ATP-binding positions include Arg-280–His-284 and Arg-309–Glu-314. Residue Glu-314 participates in L-arginine binding.

This sequence belongs to the ATP:guanido phosphotransferase family. Glycosylated. As to expression, muscle (at protein level).

It catalyses the reaction L-arginine + ATP = N(omega)-phospho-L-arginine + ADP + H(+). Its function is as follows. Catalyzes the reversible transfer of high energy ATP gamma-phosphate group to L-arginine. In Procambarus clarkii (Red swamp crayfish), this protein is Arginine kinase Pro c 2.0101.